Reading from the N-terminus, the 397-residue chain is MSNVLAINAGSSSLKFQLIKMPEEQVIAKGLVERIGMPDAIFSVEADGEKDKKVTEIADHSVAVKMLLESLTSTGVIQSFDEIDAVGHRVVHGGEYFSDSVLITDEIIQQIEEISELAPLHNPANLTGIHAFKEILPEIPMVAVFDTAFHQSMPEASYMYSLPREYYEEYGIRKYGFHGTSHKYVSERAADLLGVPLSNLRLISCHIGNGASVTAIKDGESIDTSMGFTPLAGVTMGTRSGNIDPALIPYIMDKTGKTADEVLNVLNKESGMLALSGFSSDLRDIEEKSETDARAELALDVFAGRIHKYIGSYAAKMNGLDAIIFTAGVGENSVTIREKILTGLEFMGIYWDPKLNDVRGKEQFINYPHSPVKVIIIPTNEEAMIAKDTVRLSGLNS.

Position 8 (asparagine 8) interacts with Mg(2+). Lysine 15 lines the ATP pocket. Substrate is bound at residue arginine 89. The Proton donor/acceptor role is filled by aspartate 146. ATP is bound by residues 206-210 (HIGNG), 281-283 (DLR), and 328-332 (GVGEN). Glutamate 381 serves as a coordination point for Mg(2+).

Belongs to the acetokinase family. Homodimer. Mg(2+) is required as a cofactor. The cofactor is Mn(2+).

It localises to the cytoplasm. The enzyme catalyses acetate + ATP = acetyl phosphate + ADP. It functions in the pathway metabolic intermediate biosynthesis; acetyl-CoA biosynthesis; acetyl-CoA from acetate: step 1/2. In terms of biological role, catalyzes the formation of acetyl phosphate from acetate and ATP. Can also catalyze the reverse reaction. The polypeptide is Acetate kinase (Oceanobacillus iheyensis (strain DSM 14371 / CIP 107618 / JCM 11309 / KCTC 3954 / HTE831)).